The following is a 375-amino-acid chain: Alanine racemase (375 aa).

Residue lysine 35 is the Proton acceptor; specific for D-alanine of the active site. At lysine 35 the chain carries N6-(pyridoxal phosphate)lysine. Arginine 130 serves as a coordination point for substrate. The active-site Proton acceptor; specific for L-alanine is tyrosine 253. Methionine 305 contacts substrate.

This sequence belongs to the alanine racemase family. Pyridoxal 5'-phosphate is required as a cofactor.

It carries out the reaction L-alanine = D-alanine. It functions in the pathway amino-acid biosynthesis; D-alanine biosynthesis; D-alanine from L-alanine: step 1/1. Catalyzes the interconversion of L-alanine and D-alanine. May also act on other amino acids. In Ralstonia nicotianae (strain ATCC BAA-1114 / GMI1000) (Ralstonia solanacearum), this protein is Alanine racemase (alr).